The following is a 561-amino-acid chain: Sesquiterpene synthase TPS2 (561 aa).

The interval 6 to 26 is disordered; that stretch reads ANGHSDVPSTQPPIGKQKKEI. Positions 277, 314, 318, 455, and 458 each coordinate (2E,6E)-farnesyl diphosphate. Positions 314 and 318 each coordinate Mg(2+). A DDXXD motif motif is present at residues 314–318; it reads DDTYD. Residues aspartate 458, serine 462, and glutamate 466 each coordinate Mg(2+).

The protein belongs to the terpene synthase family. Tpsa subfamily. Monomer. It depends on Mg(2+) as a cofactor.

The protein localises to the cytoplasm. The catalysed reaction is (2E,6E)-farnesyl diphosphate = beta-ylangene + diphosphate. It catalyses the reaction (2E,6E)-farnesyl diphosphate = beta-copaene + diphosphate. It carries out the reaction (2E,6E)-farnesyl diphosphate = beta-cubebene + diphosphate. Its pathway is secondary metabolite biosynthesis; terpenoid biosynthesis. In terms of biological role, sesquiterpene synthase involved in the biosynthesis of volatile organic compounds. Mediates the conversion of (2E,6E)-farnesyl diphosphate (FPP) into beta-ylangene, beta-copaene and beta-cubebene. Does not use (2E)-geranyl diphosphate (GPP) as substrate. The sequence is that of Sesquiterpene synthase TPS2 from Cananga odorata (Ylang-ylang tree).